Consider the following 444-residue polypeptide: ATP-dependent protease ATPase subunit HslU (444 aa).

Residues isoleucine 18, 60 to 65 (GVGKTE), aspartate 256, glutamate 322, and arginine 394 each bind ATP.

The protein belongs to the ClpX chaperone family. HslU subfamily. As to quaternary structure, a double ring-shaped homohexamer of HslV is capped on each side by a ring-shaped HslU homohexamer. The assembly of the HslU/HslV complex is dependent on binding of ATP.

The protein resides in the cytoplasm. Its function is as follows. ATPase subunit of a proteasome-like degradation complex; this subunit has chaperone activity. The binding of ATP and its subsequent hydrolysis by HslU are essential for unfolding of protein substrates subsequently hydrolyzed by HslV. HslU recognizes the N-terminal part of its protein substrates and unfolds these before they are guided to HslV for hydrolysis. In Serratia proteamaculans (strain 568), this protein is ATP-dependent protease ATPase subunit HslU.